We begin with the raw amino-acid sequence, 532 residues long: 2,3-bisphosphoglycerate-independent phosphoglycerate mutase (532 aa).

Mn(2+) is bound by residues D15 and S65. S65 (phosphoserine intermediate) is an active-site residue. Residues H126, 156 to 157 (RD), R188, R194, 258 to 261 (RPDR), and K331 contribute to the substrate site. Residues D398, H402, D439, H440, and H457 each contribute to the Mn(2+) site.

Belongs to the BPG-independent phosphoglycerate mutase family. In terms of assembly, monomer. Mn(2+) is required as a cofactor.

The catalysed reaction is (2R)-2-phosphoglycerate = (2R)-3-phosphoglycerate. The protein operates within carbohydrate degradation; glycolysis; pyruvate from D-glyceraldehyde 3-phosphate: step 3/5. Its function is as follows. Catalyzes the interconversion of 2-phosphoglycerate and 3-phosphoglycerate. This is 2,3-bisphosphoglycerate-independent phosphoglycerate mutase from Gloeothece citriformis (strain PCC 7424) (Cyanothece sp. (strain PCC 7424)).